We begin with the raw amino-acid sequence, 196 residues long: Peroxynitrite isomerase (196 aa).

Residues 1-29 are disordered; it reads MSDENPLQPPWLNAPPVDPYPYEESHDLR. The segment covering 7 to 19 has biased composition (pro residues); the sequence is LQPPWLNAPPVDP. Positions 46 to 52 match the GXWXGXG motif; that stretch reads GVWRGRG. Histidine 186 provides a ligand contact to heme b.

It belongs to the nitrobindin family. As to quaternary structure, homodimer. The cofactor is heme b.

The enzyme catalyses peroxynitrite = nitrate. The protein operates within nitrogen metabolism. Functionally, heme-binding protein able to scavenge peroxynitrite and to protect free L-tyrosine against peroxynitrite-mediated nitration, by acting as a peroxynitrite isomerase that converts peroxynitrite to nitrate. Therefore, this protein likely plays a role in peroxynitrite sensing and in the detoxification of reactive nitrogen and oxygen species (RNS and ROS, respectively). Is able to bind nitric oxide (NO) in vitro, but may act as a sensor of peroxynitrite levels in vivo. The polypeptide is Peroxynitrite isomerase (Salinispora arenicola (strain CNS-205)).